Consider the following 369-residue polypeptide: S-adenosylmethionine:tRNA ribosyltransferase-isomerase (369 aa).

This sequence belongs to the QueA family. In terms of assembly, monomer.

It localises to the cytoplasm. The enzyme catalyses 7-aminomethyl-7-carbaguanosine(34) in tRNA + S-adenosyl-L-methionine = epoxyqueuosine(34) in tRNA + adenine + L-methionine + 2 H(+). The protein operates within tRNA modification; tRNA-queuosine biosynthesis. Transfers and isomerizes the ribose moiety from AdoMet to the 7-aminomethyl group of 7-deazaguanine (preQ1-tRNA) to give epoxyqueuosine (oQ-tRNA). The sequence is that of S-adenosylmethionine:tRNA ribosyltransferase-isomerase from Acaryochloris marina (strain MBIC 11017).